The following is a 273-amino-acid chain: Glutamate 5-kinase (273 aa).

Lysine 15 contacts ATP. 3 residues coordinate substrate: serine 55, aspartate 142, and asparagine 158. Residues 178-179 and 220-226 contribute to the ATP site; these read SD and TGGMLSK.

The protein belongs to the glutamate 5-kinase family.

It localises to the cytoplasm. It carries out the reaction L-glutamate + ATP = L-glutamyl 5-phosphate + ADP. It functions in the pathway amino-acid biosynthesis; L-proline biosynthesis; L-glutamate 5-semialdehyde from L-glutamate: step 1/2. Its function is as follows. Catalyzes the transfer of a phosphate group to glutamate to form L-glutamate 5-phosphate. This is Glutamate 5-kinase from Streptococcus pyogenes serotype M2 (strain MGAS10270).